Reading from the N-terminus, the 90-residue chain is Putative defensin-like protein 64 (90 aa).

Positions 1-23 are cleaved as a signal peptide; it reads MWGRQIVLKIFFLVLSCVIVIET. 2 disulfides stabilise this stretch: C33–C56 and C42–C77.

This sequence belongs to the DEFL family.

The protein localises to the secreted. This Arabidopsis thaliana (Mouse-ear cress) protein is Putative defensin-like protein 64.